Reading from the N-terminus, the 67-residue chain is MDPKLLDILVCPVTKTPLQLDKAQQELISTAANLAFPVRDGIPIMLEEEARTLTAEEKERFMKQKRG.

It belongs to the UPF0434 family.

This is UPF0434 protein Tcr_0959 from Hydrogenovibrio crunogenus (strain DSM 25203 / XCL-2) (Thiomicrospira crunogena).